We begin with the raw amino-acid sequence, 228 residues long: Methyltransferase verB (228 aa).

Belongs to the methyltransferase superfamily.

It participates in secondary metabolite biosynthesis; terpenoid biosynthesis. The protein operates within mycotoxin biosynthesis. In terms of biological role, methyltransferase; part of the gene cluster that mediates the biosynthesis of the neurotoxin verrucosidin, a methylated alpha-pyrone polyketide that inhibits oxidative phosphorylation in mitochondria and thereby causes neurological diseases. The carbon backbone of verrucosidin is synthesized by the HR-PKS verA, and further modified by the other verrucodidin cluster enzymes. The sequence is that of Methyltransferase verB from Penicillium polonicum.